A 196-amino-acid chain; its full sequence is ATP-dependent Clp protease proteolytic subunit (196 aa).

The Nucleophile role is filled by Ser-98. Residue His-123 is part of the active site.

It belongs to the peptidase S14 family. Fourteen ClpP subunits assemble into 2 heptameric rings which stack back to back to give a disk-like structure with a central cavity, resembling the structure of eukaryotic proteasomes.

The protein resides in the cytoplasm. It carries out the reaction Hydrolysis of proteins to small peptides in the presence of ATP and magnesium. alpha-casein is the usual test substrate. In the absence of ATP, only oligopeptides shorter than five residues are hydrolyzed (such as succinyl-Leu-Tyr-|-NHMec, and Leu-Tyr-Leu-|-Tyr-Trp, in which cleavage of the -Tyr-|-Leu- and -Tyr-|-Trp bonds also occurs).. Its function is as follows. Cleaves peptides in various proteins in a process that requires ATP hydrolysis. Has a chymotrypsin-like activity. Plays a major role in the degradation of misfolded proteins. The chain is ATP-dependent Clp protease proteolytic subunit from Anoxybacillus flavithermus (strain DSM 21510 / WK1).